The sequence spans 545 residues: Zinc finger protein 697 (545 aa).

Residues 1–143 (MKQEDNQGVC…EQPAPPVLPW (143 aa)) are disordered. Lysine 2 is covalently cross-linked (Glycyl lysine isopeptide (Lys-Gly) (interchain with G-Cter in SUMO2)). The segment covering 23-36 (DFEDSEDREGDPEE) has biased composition (acidic residues). Positions 45 to 55 (DTNKREGHPEP) are enriched in basic and acidic residues. Acidic residues-rich tracts occupy residues 79-94 (LSEE…EDDQ) and 118-135 (EDDD…EEEQ). 11 C2H2-type zinc fingers span residues 189-211 (TICP…QRIH), 261-283 (FRCG…LRLH), 289-311 (NLCA…RRLH), 317-339 (YPCP…RRAH), 353-375 (FACG…QRIH), 381-403 (HGCG…QRVH), 409-431 (YMCS…KRTH), 437-459 (YVCR…LRVH), 465-487 (FRCG…QRTH), 493-515 (YTCI…RRIH), and 521-543 (HKCA…QKLH).

The protein belongs to the krueppel C2H2-type zinc-finger protein family.

Its subcellular location is the nucleus. RNA-interacting protein with a high number of miRNA targets. Acts as a damage-induced regulator of muscle remodeling by mediating the interferon gamma response in muscle cells. The protein is Zinc finger protein 697 of Homo sapiens (Human).